Here is a 165-residue protein sequence, read N- to C-terminus: UPF0303 protein Bphy_1660 (165 aa).

The protein belongs to the UPF0303 family.

This is UPF0303 protein Bphy_1660 from Paraburkholderia phymatum (strain DSM 17167 / CIP 108236 / LMG 21445 / STM815) (Burkholderia phymatum).